The following is a 924-amino-acid chain: Aminopeptidase 2 (924 aa).

Residues 1–45 (MASNNTSQRSGFSSFFCRLKTYFCNHFLCLFVLSFFPLSFRRLCL) form the signal peptide. The propeptide occupies 46–57 (LCHLCEKSNLWL). Serine 58 carries the N-acetylserine; partial modification. Asparagine 92 carries N-linked (GlcNAc...) asparagine glycosylation. Glutamate 194 contacts substrate. N-linked (GlcNAc...) asparagine glycosylation is present at asparagine 229. Residue 327-331 (GAMEN) participates in substrate binding. Histidine 363 is a binding site for Zn(2+). Glutamate 364 functions as the Proton acceptor in the catalytic mechanism. Zn(2+)-binding residues include histidine 367 and glutamate 386.

Belongs to the peptidase M1 family. Zn(2+) serves as cofactor.

It localises to the secreted. The protein resides in the cell wall. Inactivated by metal-chelating agents phenanthroline and EDTA. Inhibited by bestatin, an aminopeptidase inhibitor. Not inhibited by pepstatin A and PMSF, inhibitors of aspartic and the serine proteases, respectively. Not inhibited by carboxypeptidase inhibitor. In terms of biological role, metalloprotease that specifically hydrolyzes peptides with N-terminal alanine, arginine and leucine residues. This Candida albicans (strain SC5314 / ATCC MYA-2876) (Yeast) protein is Aminopeptidase 2 (APE2).